The sequence spans 819 residues: Advillin (819 aa).

The interval 1 to 731 (MSLSSAFRAV…YEQLKNELGD (731 aa)) is core. The Gelsolin-like 1 repeat unit spans residues 24 to 73 (MELALVPLSAHGNFYEGDCYIVLSTRRVGSLLSQNIHFWIGKDSSQDEQS). At Tyr85 the chain carries Phosphotyrosine. Residues 109–116 (KQGIIYKK) and 135–143 (RLLHVKGKR) each bind a 1,2-diacyl-sn-glycero-3-phospho-(1D-myo-inositol-4,5-bisphosphate). Gelsolin-like repeat units lie at residues 145–185 (IQAT…GERL), 262–306 (LSVT…VEKQ), 403–454 (ENLE…DELA), 525–565 (TKAV…DERA), and 628–669 (FLVT…TEKK). Residues 628 to 819 (FLVTEVTDFT…LQLKKERGLF (192 aa)) are required for interaction with F-actin. A headpiece region spans residues 732–819 (ATAIVRITAD…LQLKKERGLF (88 aa)). Tyr748 and Tyr758 each carry phosphotyrosine. In terms of domain architecture, HP spans 753-819 (DGEPKYYPVE…LQLKKERGLF (67 aa)).

This sequence belongs to the villin/gelsolin family. Associates (via C-terminus) with actin. Interacts with F-actin. Interacts with SCARF1; the interaction occurs in embryonic dorsal root ganglions at 18 dpc and induces neurite-like outgrowth. Interacts with PLCE1. Interacts with ACTR2 and ACTR3; associates with the ARP2/3 complex. In terms of tissue distribution, most highly expressed in the endometrium of the uterus, the intestinal villi and the testes. Weaker expression also detected in the brain, dorsal root ganglions and on the surface of the tongue.

Its subcellular location is the cytoplasm. The protein localises to the cytoskeleton. The protein resides in the cell projection. It localises to the lamellipodium. It is found in the cell junction. Its subcellular location is the focal adhesion. The protein localises to the neuron projection. The protein resides in the axon. Functionally, ca(2+)-regulated actin-binding protein which plays an important role in actin bundling. May have a unique function in the morphogenesis of neuronal cells which form ganglia. Required for SREC1-mediated regulation of neurite-like outgrowth. Plays a role in regenerative sensory axon outgrowth and remodeling processes after peripheral injury in neonates. Involved in the formation of long fine actin-containing filopodia-like structures in fibroblast. Plays a role in ciliogenesis. In podocytes, controls lamellipodia formation through the regulation of EGF-induced diacylglycerol generation by PLCE1 and ARP2/3 complex assembly. This is Advillin from Mus musculus (Mouse).